Reading from the N-terminus, the 391-residue chain is Erythronate-4-phosphate dehydrogenase (391 aa).

Substrate-binding residues include serine 45 and threonine 67. 2 residues coordinate NAD(+): aspartate 147 and threonine 176. Arginine 209 is an active-site residue. Residue aspartate 238 coordinates NAD(+). The active site involves glutamate 243. Histidine 260 serves as the catalytic Proton donor. Glycine 263 is a binding site for NAD(+). A substrate-binding site is contributed by tyrosine 264.

It belongs to the D-isomer specific 2-hydroxyacid dehydrogenase family. PdxB subfamily. Homodimer.

It localises to the cytoplasm. The catalysed reaction is 4-phospho-D-erythronate + NAD(+) = (R)-3-hydroxy-2-oxo-4-phosphooxybutanoate + NADH + H(+). It participates in cofactor biosynthesis; pyridoxine 5'-phosphate biosynthesis; pyridoxine 5'-phosphate from D-erythrose 4-phosphate: step 2/5. In terms of biological role, catalyzes the oxidation of erythronate-4-phosphate to 3-hydroxy-2-oxo-4-phosphonooxybutanoate. The sequence is that of Erythronate-4-phosphate dehydrogenase from Photobacterium profundum (strain SS9).